Consider the following 570-residue polypeptide: GDP-Man:Man(3)GlcNAc(2)-PP-Dol alpha-1,2-mannosyltransferase (570 aa).

Over 1–7 the chain is Lumenal; it reads MKLADFV. The chain crosses the membrane as a helical span at residues 8–70; the sequence is TYVFGSLLAG…DFGWKNSSVR (63 aa). At 71 to 200 the chain is on the cytoplasmic side; the sequence is RAFILASERP…RLVESKSWPK (130 aa). The helical intramembrane region spans 201-221; it reads FTLLGQAYGSIILSIEALTTL. The Cytoplasmic portion of the chain corresponds to 222–446; that stretch reads APDYWIDTMG…FGINAMWNEH (225 aa). The helical intramembrane region spans 447–467; it reads FGIAVVEYMASGLIPLCHASA. Over 468–570 the chain is Cytoplasmic; it reads GPLYDIVVPW…LNLTHNRMFS (103 aa).

The protein belongs to the glycosyltransferase group 1 family.

It localises to the endoplasmic reticulum membrane. The enzyme catalyses an alpha-D-Man-(1-&gt;3)-[alpha-D-Man-(1-&gt;6)]-beta-D-Man-(1-&gt;4)-beta-D-GlcNAc-(1-&gt;4)-alpha-D-GlcNAc-diphospho-di-trans,poly-cis-dolichol + 2 GDP-alpha-D-mannose = an alpha-D-Man-(1-&gt;2)-alpha-D-Man-(1-&gt;2)-alpha-D-Man-(1-&gt;3)-[alpha-D-Man-(1-&gt;6)]-beta-D-Man-(1-&gt;4)-beta-D-GlcNAc-(1-&gt;4)-alpha-D-GlcNAc-diphospho-di-trans,poly-cis-dolichol + 2 GDP + 2 H(+). It participates in protein modification; protein glycosylation. Functionally, GDP-Man:Man(3)GlcNAc(2)-PP-Dol alpha-1,2-mannosyltransferase that operates in the biosynthetic pathway of dolichol-linked oligosaccharides, the glycan precursors employed in protein asparagine (N)-glycosylation. The assembly of dolichol-linked oligosaccharides begins on the cytosolic side of the endoplasmic reticulum membrane and finishes in its lumen. The sequential addition of sugars to dolichol pyrophosphate produces dolichol-linked oligosaccharides containing fourteen sugars, including two GlcNAcs, nine mannoses and three glucoses. Once assembled, the oligosaccharide is transferred from the lipid to nascent proteins by oligosaccharyltransferases. Catalyzes, on the cytoplasmic face of the endoplasmic reticulum, the addition of the fourth and fifth mannose residues to the dolichol-linked oligosaccharide chain, to produce Man(5)GlcNAc(2)-PP-dolichol core oligosaccharide. The sequence is that of GDP-Man:Man(3)GlcNAc(2)-PP-Dol alpha-1,2-mannosyltransferase (ALG11) from Kluyveromyces lactis (strain ATCC 8585 / CBS 2359 / DSM 70799 / NBRC 1267 / NRRL Y-1140 / WM37) (Yeast).